A 173-amino-acid polypeptide reads, in one-letter code: MNRQEKAQIIEQLKEKAERASIAIVTDFKGLGVEEFTQLRANLRNVGVDCQVVKNTLARLAFTGTDHEVLADKFKENCAIVIGYDDPVAAAKAVADFAKESKTFDMRFASLEGKYLDEDGVKALSKLPSKEELLGKALGTMNAVPTNFVSLLANVPRGFLNVLTALKDQKEAA.

Belongs to the universal ribosomal protein uL10 family. In terms of assembly, part of the ribosomal stalk of the 50S ribosomal subunit. The N-terminus interacts with L11 and the large rRNA to form the base of the stalk. The C-terminus forms an elongated spine to which L12 dimers bind in a sequential fashion forming a multimeric L10(L12)X complex.

Forms part of the ribosomal stalk, playing a central role in the interaction of the ribosome with GTP-bound translation factors. In Maridesulfovibrio salexigens (strain ATCC 14822 / DSM 2638 / NCIMB 8403 / VKM B-1763) (Desulfovibrio salexigens), this protein is Large ribosomal subunit protein uL10.